The following is a 195-amino-acid chain: MIRTIIVFMLLTISFGQNIIDYHCDNCDENAECMVELKEDATFSHYKCACKSGYSGDGYICLANKCQFDYECPSSYFHGECNNGICACRENNGFVWNPSFDNLIDRDVCKCEYGSNLYWFGGRAICIPNGQCMEKYHCTSTYEFYKISCQEPGSYGNFGICVCNYGYQQNDNECYCPPHKKEVWDSSNPRYICLE.

The N-terminal stretch at 1–16 (MIRTIIVFMLLTISFG) is a signal peptide.

This is an uncharacterized protein from Acanthamoeba polyphaga mimivirus (APMV).